The primary structure comprises 255 residues: Imidazole glycerol phosphate synthase subunit HisF (255 aa).

Catalysis depends on residues aspartate 11 and aspartate 130.

It belongs to the HisA/HisF family. In terms of assembly, heterodimer of HisH and HisF.

The protein localises to the cytoplasm. The enzyme catalyses 5-[(5-phospho-1-deoxy-D-ribulos-1-ylimino)methylamino]-1-(5-phospho-beta-D-ribosyl)imidazole-4-carboxamide + L-glutamine = D-erythro-1-(imidazol-4-yl)glycerol 3-phosphate + 5-amino-1-(5-phospho-beta-D-ribosyl)imidazole-4-carboxamide + L-glutamate + H(+). Its pathway is amino-acid biosynthesis; L-histidine biosynthesis; L-histidine from 5-phospho-alpha-D-ribose 1-diphosphate: step 5/9. Functionally, IGPS catalyzes the conversion of PRFAR and glutamine to IGP, AICAR and glutamate. The HisF subunit catalyzes the cyclization activity that produces IGP and AICAR from PRFAR using the ammonia provided by the HisH subunit. The protein is Imidazole glycerol phosphate synthase subunit HisF of Rhodopseudomonas palustris (strain BisA53).